Reading from the N-terminus, the 400-residue chain is Subtilisin-like protease 7 (400 aa).

The signal sequence occupies residues 1–20; the sequence is MGFITKAIPLALAAASVING. A propeptide spanning residues 21–119 is cleaved from the precursor; the sequence is AEILETRAGV…IERDARVQIN (99 aa). The Inhibitor I9 domain occupies 36–118; the sequence is KYIVVMNDGM…YIERDARVQI (83 aa). The Peptidase S8 domain maps to 129 to 400; sequence SWGLARVGSK…GKLINNGSGK (272 aa). Catalysis depends on charge relay system residues aspartate 161 and histidine 192. N-linked (GlcNAc...) asparagine glycosylation is present at asparagine 252. Catalysis depends on serine 346, which acts as the Charge relay system. N-linked (GlcNAc...) asparagine glycosylation occurs at asparagine 396.

It belongs to the peptidase S8 family.

Its subcellular location is the secreted. Functionally, secreted subtilisin-like serine protease with keratinolytic activity that contributes to pathogenicity. In Arthroderma gypseum (strain ATCC MYA-4604 / CBS 118893) (Microsporum gypseum), this protein is Subtilisin-like protease 7 (SUB7).